Here is a 413-residue protein sequence, read N- to C-terminus: Peptide chain release factor 1, mitochondrial (413 aa).

Glutamine 287 bears the N5-methylglutamine mark. A disordered region spans residues 335 to 363; that stretch reads RLEKEEKERKARKSQVSSTNRSDKIRTYN.

It belongs to the prokaryotic/mitochondrial release factor family. Post-translationally, methylation of glutamine in the GGQ triplet is conserved from bacteria to mammals. N5-methylated on Gln-287 by MTQ1.

It localises to the mitochondrion. Its function is as follows. Mitochondrial peptide chain release factor that directs the termination of translation in response to the peptide chain termination codons UAA and UAG. This is Peptide chain release factor 1, mitochondrial (MRF1) from Saccharomyces cerevisiae (strain ATCC 204508 / S288c) (Baker's yeast).